The sequence spans 291 residues: Small ribosomal subunit biogenesis GTPase RsgA (291 aa).

The CP-type G domain maps to Lys63–Leu221. GTP is bound by residues Thr112–Asp115 and Gly164–Thr172. Positions 245, 250, 252, and 258 each coordinate Zn(2+).

It belongs to the TRAFAC class YlqF/YawG GTPase family. RsgA subfamily. As to quaternary structure, monomer. Associates with 30S ribosomal subunit, binds 16S rRNA. Zn(2+) serves as cofactor.

It is found in the cytoplasm. Its function is as follows. One of several proteins that assist in the late maturation steps of the functional core of the 30S ribosomal subunit. Helps release RbfA from mature subunits. May play a role in the assembly of ribosomal proteins into the subunit. Circularly permuted GTPase that catalyzes slow GTP hydrolysis, GTPase activity is stimulated by the 30S ribosomal subunit. This chain is Small ribosomal subunit biogenesis GTPase RsgA, found in Staphylococcus saprophyticus subsp. saprophyticus (strain ATCC 15305 / DSM 20229 / NCIMB 8711 / NCTC 7292 / S-41).